We begin with the raw amino-acid sequence, 291 residues long: Ribosomal RNA small subunit methyltransferase I (291 aa).

Belongs to the methyltransferase superfamily. RsmI family.

The protein resides in the cytoplasm. It catalyses the reaction cytidine(1402) in 16S rRNA + S-adenosyl-L-methionine = 2'-O-methylcytidine(1402) in 16S rRNA + S-adenosyl-L-homocysteine + H(+). Functionally, catalyzes the 2'-O-methylation of the ribose of cytidine 1402 (C1402) in 16S rRNA. This is Ribosomal RNA small subunit methyltransferase I from Neisseria meningitidis serogroup A / serotype 4A (strain DSM 15465 / Z2491).